The chain runs to 100 residues: Urease subunit gamma (100 aa).

It belongs to the urease gamma subunit family. Heterotrimer of UreA (gamma), UreB (beta) and UreC (alpha) subunits. Three heterotrimers associate to form the active enzyme.

It localises to the cytoplasm. The catalysed reaction is urea + 2 H2O + H(+) = hydrogencarbonate + 2 NH4(+). It functions in the pathway nitrogen metabolism; urea degradation; CO(2) and NH(3) from urea (urease route): step 1/1. This chain is Urease subunit gamma, found in Rhodopseudomonas palustris (strain BisA53).